A 195-amino-acid chain; its full sequence is Imidazoleglycerol-phosphate dehydratase (195 aa).

The protein belongs to the imidazoleglycerol-phosphate dehydratase family.

The protein localises to the cytoplasm. The catalysed reaction is D-erythro-1-(imidazol-4-yl)glycerol 3-phosphate = 3-(imidazol-4-yl)-2-oxopropyl phosphate + H2O. Its pathway is amino-acid biosynthesis; L-histidine biosynthesis; L-histidine from 5-phospho-alpha-D-ribose 1-diphosphate: step 6/9. In Heliobacterium modesticaldum (strain ATCC 51547 / Ice1), this protein is Imidazoleglycerol-phosphate dehydratase.